The following is a 316-amino-acid chain: 4-hydroxy-3-methylbut-2-enyl diphosphate reductase (316 aa).

Cys12 provides a ligand contact to [4Fe-4S] cluster. Residues His41 and His74 each coordinate (2E)-4-hydroxy-3-methylbut-2-enyl diphosphate. Dimethylallyl diphosphate-binding residues include His41 and His74. Isopentenyl diphosphate-binding residues include His41 and His74. Position 96 (Cys96) interacts with [4Fe-4S] cluster. His124 serves as a coordination point for (2E)-4-hydroxy-3-methylbut-2-enyl diphosphate. His124 serves as a coordination point for dimethylallyl diphosphate. His124 serves as a coordination point for isopentenyl diphosphate. Glu126 functions as the Proton donor in the catalytic mechanism. A (2E)-4-hydroxy-3-methylbut-2-enyl diphosphate-binding site is contributed by Thr167. A [4Fe-4S] cluster-binding site is contributed by Cys197. The (2E)-4-hydroxy-3-methylbut-2-enyl diphosphate site is built by Ser225, Ser226, Asn227, and Ser269. Dimethylallyl diphosphate is bound by residues Ser225, Ser226, Asn227, and Ser269. Residues Ser225, Ser226, Asn227, and Ser269 each coordinate isopentenyl diphosphate.

It belongs to the IspH family. As to quaternary structure, homodimer. Requires [4Fe-4S] cluster as cofactor.

The catalysed reaction is isopentenyl diphosphate + 2 oxidized [2Fe-2S]-[ferredoxin] + H2O = (2E)-4-hydroxy-3-methylbut-2-enyl diphosphate + 2 reduced [2Fe-2S]-[ferredoxin] + 2 H(+). It catalyses the reaction dimethylallyl diphosphate + 2 oxidized [2Fe-2S]-[ferredoxin] + H2O = (2E)-4-hydroxy-3-methylbut-2-enyl diphosphate + 2 reduced [2Fe-2S]-[ferredoxin] + 2 H(+). Its pathway is isoprenoid biosynthesis; dimethylallyl diphosphate biosynthesis; dimethylallyl diphosphate from (2E)-4-hydroxy-3-methylbutenyl diphosphate: step 1/1. It participates in isoprenoid biosynthesis; isopentenyl diphosphate biosynthesis via DXP pathway; isopentenyl diphosphate from 1-deoxy-D-xylulose 5-phosphate: step 6/6. Catalyzes the conversion of 1-hydroxy-2-methyl-2-(E)-butenyl 4-diphosphate (HMBPP) into a mixture of isopentenyl diphosphate (IPP) and dimethylallyl diphosphate (DMAPP). Acts in the terminal step of the DOXP/MEP pathway for isoprenoid precursor biosynthesis. In Pectobacterium carotovorum subsp. carotovorum (strain PC1), this protein is 4-hydroxy-3-methylbut-2-enyl diphosphate reductase.